We begin with the raw amino-acid sequence, 429 residues long: Formate-dependent phosphoribosylglycinamide formyltransferase (429 aa).

N(1)-(5-phospho-beta-D-ribosyl)glycinamide is bound by residues 26-27 (EL) and E86. Residues R118, K159, 199-202 (EEHI), and E207 each bind ATP. The 197-residue stretch at 123–319 (ETLAREAKVP…EFGLHLRAVL (197 aa)) folds into the ATP-grasp domain. Mg(2+) contacts are provided by E276 and E288. N(1)-(5-phospho-beta-D-ribosyl)glycinamide contacts are provided by residues D295, K375, and 382-383 (RR).

The protein belongs to the PurK/PurT family. As to quaternary structure, homodimer.

It carries out the reaction N(1)-(5-phospho-beta-D-ribosyl)glycinamide + formate + ATP = N(2)-formyl-N(1)-(5-phospho-beta-D-ribosyl)glycinamide + ADP + phosphate + H(+). Its pathway is purine metabolism; IMP biosynthesis via de novo pathway; N(2)-formyl-N(1)-(5-phospho-D-ribosyl)glycinamide from N(1)-(5-phospho-D-ribosyl)glycinamide (formate route): step 1/1. Its function is as follows. Involved in the de novo purine biosynthesis. Catalyzes the transfer of formate to 5-phospho-ribosyl-glycinamide (GAR), producing 5-phospho-ribosyl-N-formylglycinamide (FGAR). Formate is provided by PurU via hydrolysis of 10-formyl-tetrahydrofolate. In Thermococcus kodakarensis (strain ATCC BAA-918 / JCM 12380 / KOD1) (Pyrococcus kodakaraensis (strain KOD1)), this protein is Formate-dependent phosphoribosylglycinamide formyltransferase.